The sequence spans 257 residues: 1-(5-phosphoribosyl)-5-[(5-phosphoribosylamino)methylideneamino] imidazole-4-carboxamide isomerase (257 aa).

D8 (proton acceptor) is an active-site residue. D129 (proton donor) is an active-site residue.

The protein belongs to the HisA/HisF family.

It localises to the cytoplasm. It catalyses the reaction 1-(5-phospho-beta-D-ribosyl)-5-[(5-phospho-beta-D-ribosylamino)methylideneamino]imidazole-4-carboxamide = 5-[(5-phospho-1-deoxy-D-ribulos-1-ylimino)methylamino]-1-(5-phospho-beta-D-ribosyl)imidazole-4-carboxamide. It functions in the pathway amino-acid biosynthesis; L-histidine biosynthesis; L-histidine from 5-phospho-alpha-D-ribose 1-diphosphate: step 4/9. This is 1-(5-phosphoribosyl)-5-[(5-phosphoribosylamino)methylideneamino] imidazole-4-carboxamide isomerase from Cyanothece sp. (strain PCC 7425 / ATCC 29141).